The primary structure comprises 392 residues: Na(+)/H(+) antiporter NhaA (392 aa).

11 helical membrane-spanning segments follow: residues Ile16 to Ala36, Leu58 to Val78, Ile93 to Leu113, Gly124 to Gly144, Ile153 to Phe173, Thr176 to Met196, Met199 to Leu219, Asp257 to Val277, Val295 to Ile315, Trp328 to Val348, and Ala362 to Leu382.

This sequence belongs to the NhaA Na(+)/H(+) (TC 2.A.33) antiporter family.

Its subcellular location is the cell inner membrane. The enzyme catalyses Na(+)(in) + 2 H(+)(out) = Na(+)(out) + 2 H(+)(in). Na(+)/H(+) antiporter that extrudes sodium in exchange for external protons. The protein is Na(+)/H(+) antiporter NhaA of Sulfurovum sp. (strain NBC37-1).